We begin with the raw amino-acid sequence, 354 residues long: Neutral protease 2 homolog MEP3 (354 aa).

Positions 1–19 (MHFTSSLLALVALTTQALA) are cleaved as a signal peptide. The propeptide occupies 20-179 (FPLNDLPKRD…QSAIPKLEKR (160 aa)). Disulfide bonds link C186/C256 and C263/C281. H305 is a binding site for Zn(2+). The active site involves E306. The Zn(2+) site is built by H309 and D320.

The protein belongs to the peptidase M35 family. Requires Zn(2+) as cofactor.

It is found in the secreted. It carries out the reaction Preferential cleavage of bonds with hydrophobic residues in P1'. Also 3-Asn-|-Gln-4 and 8-Gly-|-Ser-9 bonds in insulin B chain.. In terms of biological role, secreted metalloproteinase that allows assimilation of proteinaceous substrates. Shows high activities on basic nuclear substrates such as histone and protamine. May be involved in virulence. This is Neutral protease 2 homolog MEP3 (MEP3) from Coccidioides posadasii (strain C735) (Valley fever fungus).